The following is a 450-amino-acid chain: Tubulin alpha chain (450 aa).

Q11 contributes to the GTP binding site. K40 carries the post-translational modification N6-acetyllysine. Positions 71, 140, 144, 145, 179, 206, and 228 each coordinate GTP. Mg(2+) is bound at residue E71. Residue E254 is part of the active site.

This sequence belongs to the tubulin family. Dimer of alpha and beta chains. A typical microtubule is a hollow water-filled tube with an outer diameter of 25 nm and an inner diameter of 15 nM. Alpha-beta heterodimers associate head-to-tail to form protofilaments running lengthwise along the microtubule wall with the beta-tubulin subunit facing the microtubule plus end conferring a structural polarity. Microtubules usually have 13 protofilaments but different protofilament numbers can be found in some organisms and specialized cells. Mg(2+) is required as a cofactor. Undergoes a tyrosination/detyrosination cycle, the cyclic removal and re-addition of a C-terminal tyrosine residue by the enzymes tubulin tyrosine carboxypeptidase (TTCP) and tubulin tyrosine ligase (TTL), respectively. Post-translationally, acetylation of alpha chains at Lys-40 stabilizes microtubules and affects affinity and processivity of microtubule motors. This modification has a role in multiple cellular functions, ranging from cell motility, cell cycle progression or cell differentiation to intracellular trafficking and signaling.

It is found in the cytoplasm. The protein localises to the cytoskeleton. It carries out the reaction GTP + H2O = GDP + phosphate + H(+). In terms of biological role, tubulin is the major constituent of microtubules, a cylinder consisting of laterally associated linear protofilaments composed of alpha- and beta-tubulin heterodimers. Microtubules grow by the addition of GTP-tubulin dimers to the microtubule end, where a stabilizing cap forms. Below the cap, tubulin dimers are in GDP-bound state, owing to GTPase activity of alpha-tubulin. The protein is Tubulin alpha chain of Haemonchus contortus (Barber pole worm).